Reading from the N-terminus, the 697-residue chain is Elongation factor G (697 aa).

The tr-type G domain maps to 8 to 290 (ERYRNIGISA…AVLDFLPSPV (283 aa)). GTP contacts are provided by residues 17–24 (AHIDAGKT), 88–92 (DTPGH), and 142–145 (NKMD).

It belongs to the TRAFAC class translation factor GTPase superfamily. Classic translation factor GTPase family. EF-G/EF-2 subfamily.

The protein localises to the cytoplasm. Catalyzes the GTP-dependent ribosomal translocation step during translation elongation. During this step, the ribosome changes from the pre-translocational (PRE) to the post-translocational (POST) state as the newly formed A-site-bound peptidyl-tRNA and P-site-bound deacylated tRNA move to the P and E sites, respectively. Catalyzes the coordinated movement of the two tRNA molecules, the mRNA and conformational changes in the ribosome. The protein is Elongation factor G of Methylobacillus flagellatus (strain ATCC 51484 / DSM 6875 / VKM B-1610 / KT).